The primary structure comprises 168 residues: Disulfide bond formation protein B 1 (168 aa).

Over 1–14 (MNELTSRLNRERRF) the chain is Cytoplasmic. Residues 15–31 (LVLLGVICLALIGGALY) traverse the membrane as a helical segment. Residues 32-49 (MQVVLGEAPCPLCILQRY) are Periplasmic-facing. C41 and C44 are joined by a disulfide. The helical transmembrane segment at 50–65 (ALLFIAIFAFIAAAMP) threads the bilayer. At 66–72 (GRKSLTF) the chain is on the cytoplasmic side. The chain crosses the membrane as a helical span at residues 73-89 (FEVLVVLSAIGGIVAAG). The Periplasmic segment spans residues 90 to 144 (NHVYILANPMVSCGIDTLQPIVDDLPLAKLWPLAFQVDGFCSTPYPPILGLSLAQ). C102 and C130 are joined by a disulfide. The helical transmembrane segment at 145–163 (WALVAFVLTTVLVPLGIYR) threads the bilayer. At 164–168 (NRRRG) the chain is on the cytoplasmic side.

The protein belongs to the DsbB family.

Its subcellular location is the cell inner membrane. Required for disulfide bond formation in some periplasmic proteins. Acts by oxidizing the DsbA protein. In Pseudomonas entomophila (strain L48), this protein is Disulfide bond formation protein B 1.